Consider the following 276-residue polypeptide: Glucosamine-6-phosphate deaminase 2 (276 aa).

Catalysis depends on Asp-72, which acts as the Proton acceptor; for enolization step. Residues 106–130 (ILDGNATDLQAECDAFEKKIKEAGG) adopt a coiled-coil conformation. The active-site For ring-opening step is Asp-141. The active-site Proton acceptor; for ring-opening step is the His-143. Glu-148 (for ring-opening step) is an active-site residue. Thr-161 carries the phosphothreonine modification.

This sequence belongs to the glucosamine/galactosamine-6-phosphate isomerase family. Homohexamer.

The protein resides in the cytoplasm. It carries out the reaction alpha-D-glucosamine 6-phosphate + H2O = beta-D-fructose 6-phosphate + NH4(+). Its pathway is nucleotide-sugar biosynthesis; UDP-N-acetyl-alpha-D-glucosamine biosynthesis; alpha-D-glucosamine 6-phosphate from D-fructose 6-phosphate: step 1/1. With respect to regulation, allosterically activated by N-acetylglucosamine-6-phosphate (GlcNAc6P). In terms of biological role, catalyzes the reversible conversion of alpha-D-glucosamine 6-phosphate (GlcN-6P) into beta-D-fructose 6-phosphate (Fru-6P) and ammonium ion, a regulatory reaction step in de novo uridine diphosphate-N-acetyl-alpha-D-glucosamine (UDP-GlcNAc) biosynthesis via hexosamine pathway. Deamination is coupled to aldo-keto isomerization mediating the metabolic flux from UDP-GlcNAc toward Fru-6P. At high ammonium level can drive amination and isomerization of Fru-6P toward hexosamines and UDP-GlcNAc synthesis. Has a role in fine tuning the metabolic fluctuations of cytosolic UDP-GlcNAc and their effects on hyaluronan synthesis that occur during tissue remodeling. The protein is Glucosamine-6-phosphate deaminase 2 of Bos taurus (Bovine).